Reading from the N-terminus, the 221-residue chain is N-(5'-phosphoribosyl)anthranilate isomerase (221 aa).

The protein belongs to the TrpF family.

It catalyses the reaction N-(5-phospho-beta-D-ribosyl)anthranilate = 1-(2-carboxyphenylamino)-1-deoxy-D-ribulose 5-phosphate. Its pathway is amino-acid biosynthesis; L-tryptophan biosynthesis; L-tryptophan from chorismate: step 3/5. The chain is N-(5'-phosphoribosyl)anthranilate isomerase from Geobacillus thermodenitrificans (strain NG80-2).